A 513-amino-acid chain; its full sequence is uncharacterized protein (513 aa).

One can recognise an HDOD domain in the interval 254 to 447; sequence IPQLPSKLLE…INTIRFHHNL (194 aa).

This is an uncharacterized protein from Treponema pallidum (strain Nichols).